We begin with the raw amino-acid sequence, 319 residues long: Serine acetyltransferase, plasmid (319 aa).

Belongs to the transferase hexapeptide repeat family.

It localises to the cytoplasm. It catalyses the reaction L-serine + acetyl-CoA = O-acetyl-L-serine + CoA. The protein operates within amino-acid biosynthesis; L-cysteine biosynthesis; L-cysteine from L-serine: step 1/2. In Synechococcus elongatus (strain ATCC 33912 / PCC 7942 / FACHB-805) (Anacystis nidulans R2), this protein is Serine acetyltransferase, plasmid (srpH).